Reading from the N-terminus, the 2400-residue chain is Retinitis pigmentosa 1-like 1 protein (2400 aa).

Doublecortin domains follow at residues 34-118 (KKIT…GPGR) and 152-231 (RRIL…PAMK). Disordered regions lie at residues 104–152 (CSDK…KTPR), 230–310 (MKNA…DDMK), 444–1064 (GRER…DREA), 1188–1251 (AMTE…GDLE), 1275–1501 (EAER…GAAE), and 1697–2400 (RGEH…DLDF). Positions 242–251 (SGLTSRNKNG) are enriched in polar residues. Positions 277-287 (RPGPSNPPVGP) are enriched in pro residues. Residues 450–460 (QDSASPASSTG) show a composition bias toward polar residues. Low complexity-rich tracts occupy residues 530–543 (GASS…GSHE) and 573–584 (DPASPALSLSSL). The span at 591–601 (AETQGQGTEQA) shows a compositional bias: polar residues. Low complexity-rich tracts occupy residues 625–637 (SSTP…SQQG) and 645–654 (ASAMSSPSSP). A compositionally biased stretch (basic residues) spans 661–670 (PRGHPRHSHY). Composition is skewed to polar residues over residues 711-740 (TRTQ…SATV) and 825-835 (CCSQPGTQPAQ). 3 stretches are compositionally biased toward low complexity: residues 864 to 880 (QRRS…HQST), 903 to 921 (PNSG…GSRG), and 941 to 953 (SGVS…RSSP). Composition is skewed to polar residues over residues 1223–1238 (LVTQ…SNQR) and 1285–1299 (ASSN…TVQE). Residues 1292-1307 (LAENTVQEEVQLEETK) form a 1-1; approximate repeat. The interval 1292-1342 (LAENTVQEEVQLEETKEGTEGEGLQEEAVQLEETKTEEGLQEEGVQLEETK) is 3 X 16 AA approximate tandem repeats of T-E-E-G-L-Q-E-E-G-V-Q-L-E-E-T-K. The stretch at 1310 to 1326 (TEGEGLQEEAVQLEETK) is one 1-2; approximate repeat. The 1-3 repeat unit spans residues 1327–1342 (TEEGLQEEGVQLEETK). Over residues 1346-1363 (GEGQQEEEAQLEEIEETG) the composition is skewed to acidic residues. Residues 1434-1445 (RASASAEPCPAE) show a composition bias toward low complexity. Composition is skewed to polar residues over residues 1460–1472 (TDPS…SGSQ) and 1489–1501 (EHTQ…GAAE). Residues 1726–1736 (AEGGLGPGLSQ) show a composition bias toward gly residues. 2 stretches are compositionally biased toward basic and acidic residues: residues 1752–1762 (LNRDKDPKLGE) and 1769–1778 (AQEREGKTHN). A run of 3 repeats spans residues 1836 to 1851 (EAPE…SEGV), 1852 to 1867 (EAPE…EGEA), and 1875 to 1890 (EAPE…SEDV). Acidic residues-rich tracts occupy residues 1836 to 1909 (EAPE…AEAP) and 1920 to 1948 (ESVE…EAAQ). The interval 1836–2244 (EAPEAEGEAQ…GEAQPESEGE (409 aa)) is 25 X 16 AA approximate tandem repeats of [ED]-[AT]-[PQ]-[ED]-[AVT]-E-[GKE]-[ED]-[AMT]-Q-[EPK]-[EAT]-[TSELP]-[EG]-[EGSQDI]-[AVIE]. The 2-4; approximate repeat unit spans residues 1891–1906 (ETPEAEWEVQPESEGA). The 2-5 repeat unit spans residues 1907–1921 (EAPEAEKEAQPETES). Residues 1923–1938 (EALETEGEDEPESEGA) form a 2-6; approximate repeat. Residues 1934-2017 (ESEGAEAQEA…EMQEAEEEAQ (84 aa)) are a coiled coil. A 2-7 repeat occupies 1939-1954 (EAQEAEEAAQEAEGQT). A compositionally biased stretch (low complexity) spans 1949-1958 (EAEGQTQPES). The stretch at 1955-1970 (QPESEVIESQEAEEEA) is one 2-8; approximate repeat. Acidic residues-rich tracts occupy residues 1959–2022 (EVIE…ESDG), 2048–2075 (AQPE…QEAE), 2083–2108 (EDVD…EAEG), and 2117–2245 (EAPE…EGET). One copy of the 2-9; approximate repeat lies at 1971–1984 (QPESEDVEALEVEV). 2 consecutive repeat copies span residues 1985–2000 (ETQE…SEDV) and 2001–2016 (EAPE…EEEA). Residues 2017 to 2031 (QPESDGVEAQPKSEG) form a 2-12; approximate repeat. The stretch at 2033 to 2048 (EAQEVEGETQKTEGDA) is one 2-13d repeat. The stretch at 2054 to 2081 (GVEAPEAEEEAQEAEGEVQEAEGEAHPE) forms a coiled coil. One copy of the 2-14 repeat lies at 2056–2071 (EAPEAEEEAQEAEGEV). The 2-15; approximate repeat unit spans residues 2072–2085 (QEAEGEAHPESEDV). 10 repeat units span residues 2086 to 2101 (DAQE…SEGV), 2102 to 2116 (EAPE…AEGI), 2117 to 2132 (EAPE…SEGI), 2133 to 2148 (EAPE…SEGV), 2149 to 2164 (EAQD…SEGI), 2165 to 2180 (EAQE…LEGV), 2181 to 2196 (EAPE…SEGI), 2197 to 2212 (EAPE…LEGV), 2213 to 2228 (EAPE…PEGV), and 2229 to 2244 (ETPE…SEGE). Residues 2292–2308 (PGSQTGPSSSRASSWGN) are compositionally biased toward polar residues. Residues 2312–2327 (KDSENDHVLGDTRSPD) are compositionally biased toward basic and acidic residues.

Interacts with RP1; has a synergistic effect with RP1 in photoreceptor differentiation. Retinal-specific; expressed in photoreceptor.

The protein resides in the cytoplasm. Its subcellular location is the cytoskeleton. It localises to the cilium axoneme. It is found in the cell projection. The protein localises to the cilium. The protein resides in the photoreceptor outer segment. Required for the differentiation of photoreceptor cells. Plays a role in the organization of outer segment of rod and cone photoreceptors. The chain is Retinitis pigmentosa 1-like 1 protein (RP1L1) from Homo sapiens (Human).